Consider the following 506-residue polypeptide: Anaerobic nitric oxide reductase transcription regulator NorR (506 aa).

The residue at position 57 (D57) is a 4-aspartylphosphate. Residues 187-416 (MIGLSPAMTQ…LEHAIHRAVV (230 aa)) form the Sigma-54 factor interaction domain. ATP contacts are provided by residues 215–222 (GETGTGKE) and 278–287 (ADNGTLFLDE). Residues 481 to 500 (WAASARALETDVANLHRLAK) constitute a DNA-binding region (H-T-H motif).

Its pathway is nitrogen metabolism; nitric oxide reduction. Required for the expression of anaerobic nitric oxide (NO) reductase, acts as a transcriptional activator for at least the norVW operon. Activation also requires sigma-54. The protein is Anaerobic nitric oxide reductase transcription regulator NorR of Salmonella newport (strain SL254).